Consider the following 291-residue polypeptide: Small ribosomal subunit biogenesis GTPase RsgA 2 (291 aa).

A CP-type G domain is found at 63–221 (ENALVRPPVA…VADTPGFSSI (159 aa)). Residues 112–115 (SKMD) and 164–172 (GQSGVGKST) each bind GTP. The Zn(2+) site is built by cysteine 245, cysteine 250, histidine 252, and cysteine 258.

It belongs to the TRAFAC class YlqF/YawG GTPase family. RsgA subfamily. As to quaternary structure, monomer. Associates with 30S ribosomal subunit, binds 16S rRNA. Zn(2+) serves as cofactor.

The protein localises to the cytoplasm. Functionally, one of several proteins that assist in the late maturation steps of the functional core of the 30S ribosomal subunit. Helps release RbfA from mature subunits. May play a role in the assembly of ribosomal proteins into the subunit. Circularly permuted GTPase that catalyzes slow GTP hydrolysis, GTPase activity is stimulated by the 30S ribosomal subunit. This is Small ribosomal subunit biogenesis GTPase RsgA 2 from Listeria innocua serovar 6a (strain ATCC BAA-680 / CLIP 11262).